We begin with the raw amino-acid sequence, 198 residues long: Crinkler effector protein BLC01 (198 aa).

The N-terminal stretch at 1 to 15 is a signal peptide; it reads MMVKLICAIVDIAGA. An LQLFLAK domain region spans residues 16 to 55; sequence AFPIDIDTNELVGDFKKVIKAENSRTIACDANDLRLFLAK. Residues 56 to 113 form a DWL domain region; it reads TDGRWLTEFEVQNGVADISVFEELDVVGAPLNMIGLSEETVSSVAITKELVKAKKTPL. The short motif at 114–119 is the HVLVXXP motif element; it reads HVLVVP.

Belongs to the Crinkler effector family.

Its subcellular location is the secreted. It is found in the host cell. In terms of biological role, secreted effector that elicits necrosis in host plants, a characteristic of plant innate immunity. The sequence is that of Crinkler effector protein BLC01 from Bremia lactucae (Lettuce downy mildew).